The primary structure comprises 593 residues: ATPase family AAA domain-containing protein 3-A (593 aa).

Positions 1–64 (MSWLFGLNKG…AKAARELDQS (64 aa)) are disordered. At 1 to 242 (MSWLFGLNKG…FRTFISDWDK (242 aa)) the chain is on the mitochondrial intermembrane side. Positions 15-27 (PGVPGFPEPPSPP) are enriched in pro residues. Basic and acidic residues-rich tracts occupy residues 33 to 44 (GGDKNKPKDKWS) and 53 to 64 (RAAKAARELDQS). Residues 52 to 215 (ERAAKAAREL…QIRLKAAEHR (164 aa)) adopt a coiled-coil conformation. A helical membrane pass occupies residues 243–260 (VTATVAGLTLLAVGVYTA). At 261 to 593 (KNATGVAGRY…LQPLLEGTQV (333 aa)) the chain is on the mitochondrial matrix side. Position 348–355 (348–355 (GPPGTGKT)) interacts with ATP.

The protein belongs to the AAA ATPase family. In terms of assembly, can form homooligomers. Homodimer formation at the N-terminus may be regulated by ATP and is required for the interaction with the inner surface of the mitochondrial outer membrane and correct mitochondrial homeostasis.

The protein localises to the mitochondrion inner membrane. The protein resides in the mitochondrion matrix. It localises to the mitochondrion nucleoid. It catalyses the reaction ATP + H2O = ADP + phosphate + H(+). In terms of biological role, essential for mitochondrial network organization, mitochondrial metabolism and cell growth at organism and cellular level. May play an important role in mitochondrial protein synthesis. May also participate in mitochondrial DNA replication. May bind to mitochondrial DNA D-loops and contribute to nucleoid stability. Required for enhanced channeling of cholesterol for hormone-dependent steroidogenesis. Involved in mitochondrial-mediated antiviral innate immunity. Required to protect mitochondria from the PERK-mediated unfolded protein response: specifically inhibits the activity of EIF2AK3/PERK at mitochondria-endoplasmic reticulum contact sites, thereby providing a safe haven for mitochondrial protein translation during endoplasmic reticulum stress. Ability to inhibit EIF2AK3/PERK is independent of its ATPase activity. Also involved in the mitochondrial DNA damage response by promoting signaling between damaged genomes and the mitochondrial membrane, leading to activation of the integrated stress response (ISR). The protein is ATPase family AAA domain-containing protein 3-A (atad3-a) of Xenopus laevis (African clawed frog).